The chain runs to 290 residues: Phosphate import ATP-binding protein PstB (290 aa).

One can recognise an ABC transporter domain in the interval 43–285 (MSVRNLNVYY…PEHELTEAYI (243 aa)). Position 75–82 (75–82 (GPSGCGKS)) interacts with ATP.

This sequence belongs to the ABC transporter superfamily. Phosphate importer (TC 3.A.1.7) family. The complex is composed of two ATP-binding proteins (PstB), two transmembrane proteins (PstC and PstA) and a solute-binding protein (PstS).

It is found in the cell inner membrane. It carries out the reaction phosphate(out) + ATP + H2O = ADP + 2 phosphate(in) + H(+). Its function is as follows. Part of the ABC transporter complex PstSACB involved in phosphate import. Responsible for energy coupling to the transport system. The chain is Phosphate import ATP-binding protein PstB from Pseudoalteromonas atlantica (strain T6c / ATCC BAA-1087).